A 58-amino-acid polypeptide reads, in one-letter code: Protein translocase subunit SecE (58 aa).

The helical transmembrane segment at 38–58 (IVMAFVGLLAYLIQLVLAFII) threads the bilayer.

Belongs to the SecE/SEC61-gamma family. As to quaternary structure, component of the Sec protein translocase complex. Heterotrimer consisting of SecY (alpha), SecG (beta) and SecE (gamma) subunits. The heterotrimers can form oligomers, although 1 heterotrimer is thought to be able to translocate proteins. Interacts with the ribosome. May interact with SecDF, and other proteins may be involved.

The protein resides in the cell membrane. Functionally, essential subunit of the Sec protein translocation channel SecYEG. Clamps together the 2 halves of SecY. May contact the channel plug during translocation. The chain is Protein translocase subunit SecE from Acidianus ambivalens (Desulfurolobus ambivalens).